Here is a 336-residue protein sequence, read N- to C-terminus: Holliday junction branch migration complex subunit RuvB (336 aa).

Residues 1–175 are large ATPase domain (RuvB-L); that stretch reads MEKYSFESVQ…FGMSFRLQFY (175 aa). Residues leucine 14, arginine 15, glycine 56, lysine 59, threonine 60, threonine 61, 122–124, arginine 165, tyrosine 175, and arginine 212 contribute to the ATP site; that span reads EDF. Threonine 60 is a Mg(2+) binding site. The tract at residues 176-253 is small ATPAse domain (RuvB-S); the sequence is EPKELSAIVI…CVRYALNELG (78 aa). The tract at residues 256–336 is head domain (RuvB-H); sequence ELGFDELDLR…IPFLEQKGLF (81 aa). Residues arginine 310 and arginine 315 each coordinate DNA.

Belongs to the RuvB family. As to quaternary structure, homohexamer. Forms an RuvA(8)-RuvB(12)-Holliday junction (HJ) complex. HJ DNA is sandwiched between 2 RuvA tetramers; dsDNA enters through RuvA and exits via RuvB. An RuvB hexamer assembles on each DNA strand where it exits the tetramer. Each RuvB hexamer is contacted by two RuvA subunits (via domain III) on 2 adjacent RuvB subunits; this complex drives branch migration. In the full resolvosome a probable DNA-RuvA(4)-RuvB(12)-RuvC(2) complex forms which resolves the HJ.

The protein resides in the cytoplasm. It carries out the reaction ATP + H2O = ADP + phosphate + H(+). The RuvA-RuvB-RuvC complex processes Holliday junction (HJ) DNA during genetic recombination and DNA repair, while the RuvA-RuvB complex plays an important role in the rescue of blocked DNA replication forks via replication fork reversal (RFR). RuvA specifically binds to HJ cruciform DNA, conferring on it an open structure. The RuvB hexamer acts as an ATP-dependent pump, pulling dsDNA into and through the RuvAB complex. RuvB forms 2 homohexamers on either side of HJ DNA bound by 1 or 2 RuvA tetramers; 4 subunits per hexamer contact DNA at a time. Coordinated motions by a converter formed by DNA-disengaged RuvB subunits stimulates ATP hydrolysis and nucleotide exchange. Immobilization of the converter enables RuvB to convert the ATP-contained energy into a lever motion, pulling 2 nucleotides of DNA out of the RuvA tetramer per ATP hydrolyzed, thus driving DNA branch migration. The RuvB motors rotate together with the DNA substrate, which together with the progressing nucleotide cycle form the mechanistic basis for DNA recombination by continuous HJ branch migration. Branch migration allows RuvC to scan DNA until it finds its consensus sequence, where it cleaves and resolves cruciform DNA. The polypeptide is Holliday junction branch migration complex subunit RuvB (Helicobacter hepaticus (strain ATCC 51449 / 3B1)).